Consider the following 220-residue polypeptide: Small ribosomal subunit protein uS2 (220 aa).

Belongs to the universal ribosomal protein uS2 family.

The protein is Small ribosomal subunit protein uS2 of Methanococcus maripaludis (strain DSM 14266 / JCM 13030 / NBRC 101832 / S2 / LL).